A 244-amino-acid polypeptide reads, in one-letter code: 3-deoxy-manno-octulosonate cytidylyltransferase (244 aa).

The protein belongs to the KdsB family.

The protein resides in the cytoplasm. The catalysed reaction is 3-deoxy-alpha-D-manno-oct-2-ulosonate + CTP = CMP-3-deoxy-beta-D-manno-octulosonate + diphosphate. It functions in the pathway nucleotide-sugar biosynthesis; CMP-3-deoxy-D-manno-octulosonate biosynthesis; CMP-3-deoxy-D-manno-octulosonate from 3-deoxy-D-manno-octulosonate and CTP: step 1/1. It participates in bacterial outer membrane biogenesis; lipopolysaccharide biosynthesis. Activates KDO (a required 8-carbon sugar) for incorporation into bacterial lipopolysaccharide in Gram-negative bacteria. This is 3-deoxy-manno-octulosonate cytidylyltransferase from Rickettsia bellii (strain OSU 85-389).